A 625-amino-acid chain; its full sequence is tRNA uridine 5-carboxymethylaminomethyl modification enzyme MnmG (625 aa).

FAD-binding positions include 13-18 (GGGHAG), valine 125, and serine 182. Residue 276 to 290 (GPRYCPSIEDKITRF) coordinates NAD(+). Glutamine 373 contacts FAD.

It belongs to the MnmG family. As to quaternary structure, homodimer. Heterotetramer of two MnmE and two MnmG subunits. The cofactor is FAD.

It localises to the cytoplasm. Its function is as follows. NAD-binding protein involved in the addition of a carboxymethylaminomethyl (cmnm) group at the wobble position (U34) of certain tRNAs, forming tRNA-cmnm(5)s(2)U34. This Lactococcus lactis subsp. cremoris (strain SK11) protein is tRNA uridine 5-carboxymethylaminomethyl modification enzyme MnmG.